The following is a 434-amino-acid chain: Glycerol-3-phosphate acyltransferase 3 (434 aa).

The chain crosses the membrane as a helical span at residues 14-34 (WLTLVLGFILLPSVFGVSLGI). A phosphoserine mark is found at Ser68 and Ser77. The next 2 membrane-spanning stretches (helical) occupy residues 137–157 (ISLR…CVLL) and 161–181 (VTLA…VGQL). Residues 229–234 (HTSPID) carry the HXXXXD motif motif.

The protein belongs to the 1-acyl-sn-glycerol-3-phosphate acyltransferase family. In terms of tissue distribution, widely expressed. Expressed in liver, kidney, testis, brain, heart, skeletal muscle, thyroid, prostate, thymus and placenta. Also expressed lung and adipose tissue.

The protein localises to the endoplasmic reticulum membrane. The catalysed reaction is sn-glycerol 3-phosphate + an acyl-CoA = a 1-acyl-sn-glycero-3-phosphate + CoA. It carries out the reaction a 1-acyl-sn-glycero-3-phosphate + an acyl-CoA = a 1,2-diacyl-sn-glycero-3-phosphate + CoA. The enzyme catalyses dodecanoyl-CoA + sn-glycerol 3-phosphate = 1-dodecanoyl-sn-glycerol 3-phosphate + CoA. It catalyses the reaction sn-glycerol 3-phosphate + hexadecanoyl-CoA = 1-hexadecanoyl-sn-glycero-3-phosphate + CoA. The catalysed reaction is sn-glycerol 3-phosphate + (9Z)-octadecenoyl-CoA = 1-(9Z-octadecenoyl)-sn-glycero-3-phosphate + CoA. It carries out the reaction (9Z,12Z)-octadecadienoyl-CoA + sn-glycerol 3-phosphate = 1-(9Z,12Z)-octadecadienoyl-sn-glycero-3-phosphate + CoA. The enzyme catalyses 1-tetradecanoyl-sn-glycerol 3-phosphate + (9Z)-octadecenoyl-CoA = 1-tetradecanoyl-2-(9Z)-octadecenoyl-sn-glycero-3-phosphate + CoA. It catalyses the reaction 1-hexadecanoyl-sn-glycero-3-phosphate + (9Z)-octadecenoyl-CoA = 1-hexadecanoyl-2-(9Z-octadecenoyl)-sn-glycero-3-phosphate + CoA. The catalysed reaction is 1-(9Z-octadecenoyl)-sn-glycero-3-phosphate + (9Z)-octadecenoyl-CoA = 1,2-di-(9Z-octadecenoyl)-sn-glycero-3-phosphate + CoA. It carries out the reaction 1-(6Z,9Z,12Z-octadecatrienoyl)-sn-glycero-3-phosphate + (9Z)-octadecenoyl-CoA = (6Z,9Z,12Z)-octadecatrienoyl-2-(9Z)-octadecenoyl-sn-glycero-3-phosphate + CoA. The enzyme catalyses 1-(9Z,12Z,15Z)-octadecatrienoyl-sn-glycero-3-phosphate + (9Z)-octadecenoyl-CoA = 1-(9Z,12Z,15Z)-octadecatrienoyl-2-(9Z)-octadecenoyl-sn-glycero-3-phosphate + CoA. It catalyses the reaction 1-(9Z-octadecenoyl)-sn-glycero-3-phosphate + tetradecanoyl-CoA = 1-(9Z)-octadecenoyl-2-tetradecanoyl-sn-glycero-3-phosphate + CoA. The catalysed reaction is 1-(9Z-octadecenoyl)-sn-glycero-3-phosphate + hexadecanoyl-CoA = 1-(9Z)-octadecenoyl-2-hexadecanoyl-sn-glycero-3-phosphate + CoA. It carries out the reaction 1-(9Z-octadecenoyl)-sn-glycero-3-phosphate + octadecanoyl-CoA = 1-(9Z-octadecenoyl)-2-octadecanoyl-sn-glycero-3-phosphate + CoA. The enzyme catalyses 1-(9Z-octadecenoyl)-sn-glycero-3-phosphate + (9Z,12Z)-octadecadienoyl-CoA = 1-(9Z)-octadecenoyl-2-(9Z,12Z)-octadecadienoyl-sn-glycero-3-phosphate + CoA. It catalyses the reaction 1-(5Z,8Z,11Z,14Z-eicosatetraenoyl)-sn-glycero-3-phosphate + (9Z)-octadecenoyl-CoA = 1-(5Z,8Z,11Z,14Z)-eicosatetraenoyl-2-(9Z)-octadecenoyl-sn-glycero-3-phosphate + CoA. Its pathway is glycerolipid metabolism; triacylglycerol biosynthesis. It functions in the pathway phospholipid metabolism; CDP-diacylglycerol biosynthesis; CDP-diacylglycerol from sn-glycerol 3-phosphate: step 1/3. Its activity is regulated as follows. Inhibited by N-ethylmaleimide (NEM). Converts glycerol-3-phosphate to 1-acyl-sn-glycerol-3-phosphate (lysophosphatidic acid or LPA) by incorporating an acyl moiety at the sn-1 position of the glycerol backbone. Also converts LPA into 1,2-diacyl-sn-glycerol-3-phosphate (phosphatidic acid or PA) by incorporating an acyl moiety at the sn-2 position of the glycerol backbone. Protects cells against lipotoxicity. This Homo sapiens (Human) protein is Glycerol-3-phosphate acyltransferase 3.